Here is a 405-residue protein sequence, read N- to C-terminus: uncharacterized protein (405 aa).

Positions 1-20 (MKAKLALSIIGLVLASLVAG) are cleaved as a signal peptide. Cys21 carries the post-translational modification N-acetylcysteine. Cys21 carries S-archaeol cysteine lipidation.

This sequence belongs to the BMP lipoprotein family.

Its subcellular location is the cell membrane. This is an uncharacterized protein from Pyrococcus horikoshii (strain ATCC 700860 / DSM 12428 / JCM 9974 / NBRC 100139 / OT-3).